The sequence spans 566 residues: Arginine--tRNA ligase (566 aa).

The 'HIGH' region signature appears at 121–131 (ANPNGPFHIGH).

Belongs to the class-I aminoacyl-tRNA synthetase family.

It localises to the cytoplasm. The enzyme catalyses tRNA(Arg) + L-arginine + ATP = L-arginyl-tRNA(Arg) + AMP + diphosphate. The protein is Arginine--tRNA ligase of Methanococcus maripaludis (strain C6 / ATCC BAA-1332).